The following is a 124-amino-acid chain: Small ribosomal subunit protein uS12 (124 aa).

The tract at residues 1 to 25 (MPTFNQLVRNGRKPPRWKTSSPALE) is disordered. At D89 the chain carries 3-methylthioaspartic acid. The disordered stretch occupies residues 104–124 (TAGVANRKQSRSKYGAKRPKS). Over residues 111–124 (KQSRSKYGAKRPKS) the composition is skewed to basic residues.

It belongs to the universal ribosomal protein uS12 family. Part of the 30S ribosomal subunit. Contacts proteins S8 and S17. May interact with IF1 in the 30S initiation complex.

Its function is as follows. With S4 and S5 plays an important role in translational accuracy. Interacts with and stabilizes bases of the 16S rRNA that are involved in tRNA selection in the A site and with the mRNA backbone. Located at the interface of the 30S and 50S subunits, it traverses the body of the 30S subunit contacting proteins on the other side and probably holding the rRNA structure together. The combined cluster of proteins S8, S12 and S17 appears to hold together the shoulder and platform of the 30S subunit. The protein is Small ribosomal subunit protein uS12 of Solibacter usitatus (strain Ellin6076).